Reading from the N-terminus, the 66-residue chain is Large ribosomal subunit protein bL35 (66 aa).

Composition is skewed to basic residues over residues 1–16 and 31–45; these read MPKQ…RFKR and HRFH…RQLR. The tract at residues 1-52 is disordered; it reads MPKQKTHRASAKRFKRTGNGGLKRSNAYTSHRFHGKTKKQRRQLRKASMVSA.

The protein belongs to the bacterial ribosomal protein bL35 family.

The chain is Large ribosomal subunit protein bL35 from Ligilactobacillus salivarius (strain UCC118) (Lactobacillus salivarius).